The primary structure comprises 196 residues: Pyridoxal 5'-phosphate synthase subunit PdxT (196 aa).

Residue 46-48 (GES) coordinates L-glutamine. The active-site Nucleophile is the Cys-78. L-glutamine-binding positions include Arg-110 and 138–139 (IR). Catalysis depends on charge relay system residues His-174 and Glu-176.

This sequence belongs to the glutaminase PdxT/SNO family. In the presence of PdxS, forms a dodecamer of heterodimers. Only shows activity in the heterodimer.

The enzyme catalyses aldehydo-D-ribose 5-phosphate + D-glyceraldehyde 3-phosphate + L-glutamine = pyridoxal 5'-phosphate + L-glutamate + phosphate + 3 H2O + H(+). The catalysed reaction is L-glutamine + H2O = L-glutamate + NH4(+). It participates in cofactor biosynthesis; pyridoxal 5'-phosphate biosynthesis. Functionally, catalyzes the hydrolysis of glutamine to glutamate and ammonia as part of the biosynthesis of pyridoxal 5'-phosphate. The resulting ammonia molecule is channeled to the active site of PdxS. In Deinococcus radiodurans (strain ATCC 13939 / DSM 20539 / JCM 16871 / CCUG 27074 / LMG 4051 / NBRC 15346 / NCIMB 9279 / VKM B-1422 / R1), this protein is Pyridoxal 5'-phosphate synthase subunit PdxT.